The sequence spans 399 residues: Elongation factor Tu (399 aa).

The tr-type G domain occupies 10–209 (KPHVNIGTIG…AVDSYIPTPV (200 aa)). The G1 stretch occupies residues 19–26 (GHVDHGKT). GTP is bound at residue 19–26 (GHVDHGKT). T26 is a Mg(2+) binding site. The tract at residues 60–64 (GITIA) is G2. A G3 region spans residues 81–84 (DCPG). GTP is bound by residues 81 to 85 (DCPGH) and 136 to 139 (NKAD). The segment at 136–139 (NKAD) is G4. The interval 174 to 176 (SAL) is G5.

This sequence belongs to the TRAFAC class translation factor GTPase superfamily. Classic translation factor GTPase family. EF-Tu/EF-1A subfamily. Monomer.

It is found in the cytoplasm. It catalyses the reaction GTP + H2O = GDP + phosphate + H(+). GTP hydrolase that promotes the GTP-dependent binding of aminoacyl-tRNA to the A-site of ribosomes during protein biosynthesis. The protein is Elongation factor Tu of Campylobacter fetus subsp. fetus (strain 82-40).